The chain runs to 185 residues: MASEAKESPANNPGLSTVRDEATKGYIMQQTMFRVKDPKASLDFYSRVLGMSLLKRLDFSEMKFSLYFLGYEDTSTAPTDPTERTVWTFGRPATIELTHNWGTESDPEFKGYHNGNSEPRGFGHIGVTVDDVHKACERFEQLGVEFVKKPHDGKMKNIAFIKDPDGYWIEIFDLKTIGTTAGNAA.

The disordered stretch occupies residues 1 to 21; the sequence is MASEAKESPANNPGLSTVRDE. Residues 27-174 enclose the VOC domain; it reads IMQQTMFRVK…DGYWIEIFDL (148 aa). Positions 30 and 34 each coordinate substrate. Residue Q30 coordinates Zn(2+). E96 contributes to the Zn(2+) binding site. Substrate is bound by residues N100, R120, H124, and 154–155; that span reads KM. H124 is a Zn(2+) binding site. E170 is a Zn(2+) binding site. E170 acts as the Proton donor/acceptor in catalysis.

The protein belongs to the glyoxalase I family. The cofactor is Zn(2+).

The catalysed reaction is (R)-S-lactoylglutathione = methylglyoxal + glutathione. The protein operates within secondary metabolite metabolism; methylglyoxal degradation; (R)-lactate from methylglyoxal: step 1/2. In terms of biological role, catalyzes the conversion of hemimercaptal, formed from methylglyoxal and glutathione, to S-lactoylglutathione. The protein is Lactoylglutathione lyase (GLY I) of Brassica juncea (Indian mustard).